A 323-amino-acid chain; its full sequence is NADH-cytochrome b5 reductase 2 (323 aa).

The chain crosses the membrane as a helical span at residues 32–48 (LAPIYVAVGLTGLGVGL). The 106-residue stretch at 72–177 (QGWVDLKLAQ…KGPIPKYPWE (106 aa)) folds into the FAD-binding FR-type domain. 180–215 (KHKHICLIAGGTGITPMYQLARKIFKDPEDQTKVTL) lines the FAD pocket.

It belongs to the flavoprotein pyridine nucleotide cytochrome reductase family. The cofactor is FAD.

It localises to the mitochondrion outer membrane. The enzyme catalyses 2 Fe(III)-[cytochrome b5] + NADH = 2 Fe(II)-[cytochrome b5] + NAD(+) + H(+). May mediate the reduction of outer membrane cytochrome b5. This chain is NADH-cytochrome b5 reductase 2 (mcr1), found in Neosartorya fischeri (strain ATCC 1020 / DSM 3700 / CBS 544.65 / FGSC A1164 / JCM 1740 / NRRL 181 / WB 181) (Aspergillus fischerianus).